The primary structure comprises 88 residues: Exodeoxyribonuclease 7 small subunit (88 aa).

The protein belongs to the XseB family. As to quaternary structure, heterooligomer composed of large and small subunits.

It is found in the cytoplasm. It carries out the reaction Exonucleolytic cleavage in either 5'- to 3'- or 3'- to 5'-direction to yield nucleoside 5'-phosphates.. Functionally, bidirectionally degrades single-stranded DNA into large acid-insoluble oligonucleotides, which are then degraded further into small acid-soluble oligonucleotides. The protein is Exodeoxyribonuclease 7 small subunit of Bordetella petrii (strain ATCC BAA-461 / DSM 12804 / CCUG 43448).